The primary structure comprises 123 residues: Large ribosomal subunit protein uL18 (123 aa).

The protein belongs to the universal ribosomal protein uL18 family. As to quaternary structure, part of the 50S ribosomal subunit; part of the 5S rRNA/L5/L18/L25 subcomplex. Contacts the 5S and 23S rRNAs.

This is one of the proteins that bind and probably mediate the attachment of the 5S RNA into the large ribosomal subunit, where it forms part of the central protuberance. The sequence is that of Large ribosomal subunit protein uL18 from Symbiobacterium thermophilum (strain DSM 24528 / JCM 14929 / IAM 14863 / T).